A 476-amino-acid chain; its full sequence is Serine/threonine-protein kinase sax-1 (476 aa).

In terms of domain architecture, Protein kinase spans 87 to 381 (FESLKVIGRG…LDEIKQCPFV (295 aa)). Residues 93 to 101 (IGRGAFGEV) and Lys116 contribute to the ATP site. Catalysis depends on Asp210, which acts as the Proton acceptor. The AGC-kinase C-terminal domain occupies 382-452 (KRIDWNHIRE…KRFDGLTQKM (71 aa)).

It belongs to the protein kinase superfamily. AGC Ser/Thr protein kinase family. Mg(2+) is required as a cofactor. Widely expressed in embryonic and larval neurons that contribute axons to the nerve ring and in hypodermal cells, including lateral seam cells. Also displays a punctate localization in muscle.

Its subcellular location is the cytoplasm. The protein resides in the nucleus. It carries out the reaction L-seryl-[protein] + ATP = O-phospho-L-seryl-[protein] + ADP + H(+). The enzyme catalyses L-threonyl-[protein] + ATP = O-phospho-L-threonyl-[protein] + ADP + H(+). Its function is as follows. Acts with sax-2 to restrict the growth of both primary and secondary neurites. Regulates mechanosensory tiling by controlling the termination point of sensory dendrites. The chain is Serine/threonine-protein kinase sax-1 from Caenorhabditis elegans.